Consider the following 239-residue polypeptide: BURP domain-containing protein 6 (239 aa).

Positions 1–19 are cleaved as a signal peptide; sequence MPGAIRDLINPVSSAASAS. The region spanning 28 to 239 is the BURP domain; that stretch reads FFLEKDLFPG…PQDDMLWVRN (212 aa).

Expressed in leaves and shoot.

In Oryza sativa subsp. japonica (Rice), this protein is BURP domain-containing protein 6 (BURP6).